The chain runs to 315 residues: Acetaldehyde dehydrogenase (315 aa).

13–16 (SGNI) contacts NAD(+). Catalysis depends on C131, which acts as the Acyl-thioester intermediate. Residues 163 to 171 (SAGPGTRAN) and N290 contribute to the NAD(+) site.

Belongs to the acetaldehyde dehydrogenase family.

The catalysed reaction is acetaldehyde + NAD(+) + CoA = acetyl-CoA + NADH + H(+). The protein is Acetaldehyde dehydrogenase of Xanthobacter autotrophicus (strain ATCC BAA-1158 / Py2).